Consider the following 174-residue polypeptide: Auxin-responsive protein IAA2 (174 aa).

The EAR-like (transcriptional repression) motif lies at 16-20 (LCLGL). The tract at residues 44–67 (FEETRDEEESTPPTKTQIVGWPPV) is disordered. Positions 77-164 (VSYVKVSMDG…SCKRLRIMKG (88 aa)) constitute a PB1 domain.

This sequence belongs to the Aux/IAA family. As to quaternary structure, homodimers and heterodimers. Interacts with the auxin-responsive protein IAA1. Interacts with TPL. As to expression, preferentially expressed in vegetative organs.

It is found in the nucleus. Aux/IAA proteins are short-lived transcriptional factors that function as repressors of early auxin response genes at low auxin concentrations. Repression is thought to result from the interaction with auxin response factors (ARFs), proteins that bind to the auxin-responsive promoter element (AuxRE). Formation of heterodimers with ARF proteins may alter their ability to modulate early auxin response genes expression. The polypeptide is Auxin-responsive protein IAA2 (IAA2) (Arabidopsis thaliana (Mouse-ear cress)).